Reading from the N-terminus, the 203-residue chain is Outer-membrane lipoprotein carrier protein (203 aa).

An N-terminal signal peptide occupies residues 1–21 (MKKQLMTSCLFAAVLAAPAFA).

The protein belongs to the LolA family. In terms of assembly, monomer.

It is found in the periplasm. In terms of biological role, participates in the translocation of lipoproteins from the inner membrane to the outer membrane. Only forms a complex with a lipoprotein if the residue after the N-terminal Cys is not an aspartate (The Asp acts as a targeting signal to indicate that the lipoprotein should stay in the inner membrane). The sequence is that of Outer-membrane lipoprotein carrier protein from Sodalis glossinidius (strain morsitans).